The following is a 272-amino-acid chain: 3-keto-5-aminohexanoate cleavage enzyme (272 aa).

Residue Glu15 participates in (5S)-5-amino-3-oxohexanoate binding. 2 residues coordinate Zn(2+): His47 and His49. (5S)-5-amino-3-oxohexanoate-binding residues include Ser83, Gly86, and Thr107. Glu226 lines the Zn(2+) pocket.

It belongs to the BKACE family. Kce subfamily. As to quaternary structure, homotetramer. The cofactor is Zn(2+).

The catalysed reaction is (5S)-5-amino-3-oxohexanoate + acetyl-CoA = (3S)-3-aminobutanoyl-CoA + acetoacetate. It functions in the pathway amino-acid degradation; L-lysine degradation via acetate pathway. Its activity is regulated as follows. 3-fold increase in activity by addition of 10 mM 2-mercaptoethanol. Addition of CoCl(2) and to a lesser extent MnCl(2) increases the activity but not MgCl(2). Inhibited by phosphate buffer but not by 5,5'-dithio-2-nitrobenzoic acid. Functionally, involved in the anaerobic fermentation of lysine. Catalyzes the reversible reaction between 3-keto-5-aminohexanoate (KAH) and acetyl-CoA to form 3-aminobutyryl-CoA and acetoacetate. The reaction involves the deprotonation of KAH, the nucleophilic addition onto acetyl-CoA and the intramolecular transfer of the CoA moiety. It can also use beta-alanyl-CoA as substrate. The chain is 3-keto-5-aminohexanoate cleavage enzyme from Fusobacterium nucleatum subsp. nucleatum (strain ATCC 25586 / DSM 15643 / BCRC 10681 / CIP 101130 / JCM 8532 / KCTC 2640 / LMG 13131 / VPI 4355).